The chain runs to 583 residues: Ribosomal lysine N-methyltransferase 1 (583 aa).

The SET domain occupies 22 to 274; that stretch reads EELKFLYTDL…QSRELSNNYG (253 aa). Residue tyrosine 273 participates in S-adenosyl-L-methionine binding. 2 coiled-coil regions span residues 378–407 and 433–459; these read KAEE…KLNS and KGQK…ENKH.

It belongs to the class V-like SAM-binding methyltransferase superfamily. RKM1 family.

It is found in the cytoplasm. Its subcellular location is the nucleus. Functionally, S-adenosyl-L-methionine-dependent protein-lysine N-methyltransferase that monomethylates ribosomal protein S18 (RPS18A and RPS18B) at 'Lys-48' and dimethylates ribosomal protein L23 (RPL23A and RPL23B) at 'Lys-106' and 'Lys-110'. The chain is Ribosomal lysine N-methyltransferase 1 from Saccharomyces cerevisiae (strain ATCC 204508 / S288c) (Baker's yeast).